Consider the following 182-residue polypeptide: MKIDKKSLKRIVKVLLNKVPKEEAALIKVSDDLTLIQEIYRKDKDFRNFILNPSAPYEDKKKIIDSLSEKAGLDPVVKEALEYIVKTNKGNLLKIIGDEFRFEVEKFFATVKGEIITAYPIDEETINSVKEVVEKKLGKKVEFDIKQDPSIIGGIIVKAGSYILDSSLKTYLQKLEQQLTAF.

The protein belongs to the ATPase delta chain family. F-type ATPases have 2 components, F(1) - the catalytic core - and F(0) - the membrane proton channel. F(1) has five subunits: alpha(3), beta(3), gamma(1), delta(1), epsilon(1). F(0) has three main subunits: a(1), b(2) and c(10-14). The alpha and beta chains form an alternating ring which encloses part of the gamma chain. F(1) is attached to F(0) by a central stalk formed by the gamma and epsilon chains, while a peripheral stalk is formed by the delta and b chains.

Its subcellular location is the cell inner membrane. In terms of biological role, f(1)F(0) ATP synthase produces ATP from ADP in the presence of a proton or sodium gradient. F-type ATPases consist of two structural domains, F(1) containing the extramembraneous catalytic core and F(0) containing the membrane proton channel, linked together by a central stalk and a peripheral stalk. During catalysis, ATP synthesis in the catalytic domain of F(1) is coupled via a rotary mechanism of the central stalk subunits to proton translocation. Functionally, this protein is part of the stalk that links CF(0) to CF(1). It either transmits conformational changes from CF(0) to CF(1) or is implicated in proton conduction. The polypeptide is ATP synthase subunit delta (Persephonella marina (strain DSM 14350 / EX-H1)).